A 530-amino-acid polypeptide reads, in one-letter code: Light-independent protochlorophyllide reductase subunit B (530 aa).

Residue aspartate 36 participates in [4Fe-4S] cluster binding. Residue aspartate 290 is the Proton donor of the active site. Residue 425–426 (GL) coordinates substrate.

It belongs to the ChlB/BchB/BchZ family. As to quaternary structure, protochlorophyllide reductase is composed of three subunits; ChlL, ChlN and ChlB. Forms a heterotetramer of two ChlB and two ChlN subunits. The cofactor is [4Fe-4S] cluster.

It carries out the reaction chlorophyllide a + oxidized 2[4Fe-4S]-[ferredoxin] + 2 ADP + 2 phosphate = protochlorophyllide a + reduced 2[4Fe-4S]-[ferredoxin] + 2 ATP + 2 H2O. It functions in the pathway porphyrin-containing compound metabolism; chlorophyll biosynthesis (light-independent). Functionally, component of the dark-operative protochlorophyllide reductase (DPOR) that uses Mg-ATP and reduced ferredoxin to reduce ring D of protochlorophyllide (Pchlide) to form chlorophyllide a (Chlide). This reaction is light-independent. The NB-protein (ChlN-ChlB) is the catalytic component of the complex. This chain is Light-independent protochlorophyllide reductase subunit B, found in Synechococcus sp. (strain WH7803).